The sequence spans 102 residues: NADH-quinone oxidoreductase subunit K (102 aa).

3 helical membrane-spanning segments follow: residues 6–26 (MEHG…GLLI), 30–50 (LLFI…AFVV), and 65–85 (ILVI…LLLL).

Belongs to the complex I subunit 4L family. In terms of assembly, NDH-1 is composed of 14 different subunits. Subunits NuoA, H, J, K, L, M, N constitute the membrane sector of the complex.

The protein resides in the cell inner membrane. The catalysed reaction is a quinone + NADH + 5 H(+)(in) = a quinol + NAD(+) + 4 H(+)(out). NDH-1 shuttles electrons from NADH, via FMN and iron-sulfur (Fe-S) centers, to quinones in the respiratory chain. The immediate electron acceptor for the enzyme in this species is believed to be ubiquinone. Couples the redox reaction to proton translocation (for every two electrons transferred, four hydrogen ions are translocated across the cytoplasmic membrane), and thus conserves the redox energy in a proton gradient. The protein is NADH-quinone oxidoreductase subunit K of Aeromonas hydrophila subsp. hydrophila (strain ATCC 7966 / DSM 30187 / BCRC 13018 / CCUG 14551 / JCM 1027 / KCTC 2358 / NCIMB 9240 / NCTC 8049).